The primary structure comprises 179 residues: Large ribosomal subunit protein uL6 (179 aa).

It belongs to the universal ribosomal protein uL6 family. As to quaternary structure, part of the 50S ribosomal subunit.

Its function is as follows. This protein binds to the 23S rRNA, and is important in its secondary structure. It is located near the subunit interface in the base of the L7/L12 stalk, and near the tRNA binding site of the peptidyltransferase center. This Pseudomonas savastanoi pv. phaseolicola (strain 1448A / Race 6) (Pseudomonas syringae pv. phaseolicola (strain 1448A / Race 6)) protein is Large ribosomal subunit protein uL6.